The sequence spans 209 residues: Large ribosomal subunit protein uL3 (209 aa).

Belongs to the universal ribosomal protein uL3 family. As to quaternary structure, part of the 50S ribosomal subunit. Forms a cluster with proteins L14 and L19.

Its function is as follows. One of the primary rRNA binding proteins, it binds directly near the 3'-end of the 23S rRNA, where it nucleates assembly of the 50S subunit. This chain is Large ribosomal subunit protein uL3, found in Nitratidesulfovibrio vulgaris (strain ATCC 29579 / DSM 644 / CCUG 34227 / NCIMB 8303 / VKM B-1760 / Hildenborough) (Desulfovibrio vulgaris).